The following is a 94-amino-acid chain: Gibberellin-regulated protein 11 (94 aa).

The first 23 residues, 1-23 (MAVFRVLLASLLISLLVLDFVHA), serve as a signal peptide directing secretion.

This sequence belongs to the GASA family. Post-translationally, six disulfide bonds may be present.

The protein localises to the secreted. In terms of biological role, gibberellin-regulated protein that may function in hormonal controlled steps of development such as seed germination, flowering and seed maturation. This is Gibberellin-regulated protein 11 (GASA11) from Arabidopsis thaliana (Mouse-ear cress).